The primary structure comprises 155 residues: Endoribonuclease YbeY (155 aa).

Positions 114, 118, and 124 each coordinate Zn(2+).

This sequence belongs to the endoribonuclease YbeY family. Requires Zn(2+) as cofactor.

Its subcellular location is the cytoplasm. In terms of biological role, single strand-specific metallo-endoribonuclease involved in late-stage 70S ribosome quality control and in maturation of the 3' terminus of the 16S rRNA. This Escherichia coli O6:K15:H31 (strain 536 / UPEC) protein is Endoribonuclease YbeY.